The sequence spans 154 residues: Ribosomal RNA large subunit methyltransferase H (154 aa).

Gly-102 provides a ligand contact to S-adenosyl-L-methionine.

It belongs to the RNA methyltransferase RlmH family. Homodimer.

It is found in the cytoplasm. The catalysed reaction is pseudouridine(1915) in 23S rRNA + S-adenosyl-L-methionine = N(3)-methylpseudouridine(1915) in 23S rRNA + S-adenosyl-L-homocysteine + H(+). Specifically methylates the pseudouridine at position 1915 (m3Psi1915) in 23S rRNA. This Phenylobacterium zucineum (strain HLK1) protein is Ribosomal RNA large subunit methyltransferase H.